The sequence spans 111 residues: Latartoxin-2b (111 aa).

The first 19 residues, 1-19 (MKVLVIIALCFFILQTALS), serve as a signal peptide directing secretion. Residues 20–43 (EDKYESFESYVEDLKSGNMKGEAR) constitute a propeptide, removed in mature form. The Processing quadruplet motif motif lies at 40–43 (GEAR). 5 disulfides stabilise this stretch: C45-C62, C52-C73, C61-C87, C75-C85, and C78-C99. At V110 the chain carries Valine amide.

This sequence belongs to the neurotoxin 19 (CSTX) family. 11 (latartoxin) subfamily. In terms of processing, contains 5 disulfide bonds. Cleavage of the propeptide depends on the processing quadruplet motif (XXXR, with at least one of X being E). Expressed by the venom gland.

The protein localises to the secreted. Functionally, insect toxin. The polypeptide is Latartoxin-2b (Lachesana tarabaevi (Spider)).